The chain runs to 352 residues: MERKPSVCRKSGSWNCLLVLFLLLLFTVVSVNFLLYMYIDQMYAPSRFSHSEVNLCPYGHFKIATIKNCSPWLTCETIKKEVRKLKLVGEGAVKKVFLSEWKGLKVALSELKSLDLQDDFLHGLRMLQSMQSRYVVVLVGYCKETFSILTEYHPLGSLKDLDETFSFPKYQGFNTWQNRLKLAIEYVSIINYLHNSPHGTLIMCDSNDLDKALSQYMLTSDFHVVANDLDALPVVDKEKGILVKCGQREITGHFVAPEQLWPYGPNIEFSDDLMPSYDEKTDIWKIPAVIDHLLGHVKGSDIVRFHLFDIHSECGKANPSERPSAQMVLDTYRKVLALLMKEMAVAETREML.

The Cytoplasmic portion of the chain corresponds to 1-16; sequence MERKPSVCRKSGSWNC. A helical; Signal-anchor for type II membrane protein membrane pass occupies residues 17-37; the sequence is LLVLFLLLLFTVVSVNFLLYM. Residues 38–352 are Lumenal-facing; that stretch reads YIDQMYAPSR…MAVAETREML (315 aa). Positions 82–352 constitute a Protein kinase domain; sequence VRKLKLVGEG…MAVAETREML (271 aa).

This sequence belongs to the protein kinase superfamily. Ser/Thr protein kinase family. STKL subfamily.

The protein localises to the endoplasmic reticulum membrane. The catalysed reaction is 3-O-[beta-D-GalNAc-(1-&gt;3)-beta-D-GlcNAc-(1-&gt;4)-alpha-D-Man]-L-Thr-[protein] + ATP = 3-O-[beta-D-GalNAc-(1-&gt;3)-beta-D-GlcNAc-(1-&gt;4)-(O-6-P-alpha-D-Man)]-Thr-[protein] + ADP + H(+). Functionally, protein O-mannose kinase that specifically mediates phosphorylation at the 6-position of an O-mannose of the trisaccharide (N-acetylgalactosamine (GalNAc)-beta-1,3-N-acetylglucosamine (GlcNAc)-beta-1,4-mannose) to generate phosphorylated O-mannosyl trisaccharide (N-acetylgalactosamine-beta-1,3-N-acetylglucosamine-beta-1,4-(phosphate-6-)mannose). Phosphorylated O-mannosyl trisaccharide is a carbohydrate structure present in alpha-dystroglycan (dag1), which is required for binding laminin G-like domain-containing extracellular proteins with high affinity. Only shows kinase activity when the GalNAc-beta-3-GlcNAc-beta-terminus is linked to the 4-position of O-mannose, suggesting that this disaccharide serves as the substrate recognition motif. The sequence is that of Protein O-mannose kinase (pomk) from Xenopus laevis (African clawed frog).